The following is a 224-amino-acid chain: Uracil phosphoribosyltransferase (224 aa).

R92 provides a ligand contact to 5-phospho-alpha-D-ribose 1-diphosphate. K109 lines the GTP pocket. 5-phospho-alpha-D-ribose 1-diphosphate contacts are provided by residues R117 and 145–153 (DPMLATGGT). Uracil contacts are provided by residues I210 and 215–217 (GDA). D216 provides a ligand contact to 5-phospho-alpha-D-ribose 1-diphosphate.

It belongs to the UPRTase family. Mg(2+) is required as a cofactor.

The enzyme catalyses UMP + diphosphate = 5-phospho-alpha-D-ribose 1-diphosphate + uracil. Its pathway is pyrimidine metabolism; UMP biosynthesis via salvage pathway; UMP from uracil: step 1/1. Its activity is regulated as follows. Allosterically activated by GTP. Functionally, catalyzes the conversion of uracil and 5-phospho-alpha-D-ribose 1-diphosphate (PRPP) to UMP and diphosphate. The sequence is that of Uracil phosphoribosyltransferase (UPP) from Nicotiana tabacum (Common tobacco).